The following is a 707-amino-acid chain: Polyribonucleotide nucleotidyltransferase (707 aa).

D491 and D497 together coordinate Mg(2+). Positions 558–617 (PRIEKIKIHPDKIGLLIGPGGKTIKKISAESGAEITIEDDGTVMIYSSSADSLEAAREMI) constitute a KH domain. An S1 motif domain is found at 622-695 (GEVTVGGIYR…EKGRYKFSRK (74 aa)).

Belongs to the polyribonucleotide nucleotidyltransferase family. Mg(2+) is required as a cofactor.

The protein resides in the cytoplasm. It carries out the reaction RNA(n+1) + phosphate = RNA(n) + a ribonucleoside 5'-diphosphate. Its function is as follows. Involved in mRNA degradation. Catalyzes the phosphorolysis of single-stranded polyribonucleotides processively in the 3'- to 5'-direction. The sequence is that of Polyribonucleotide nucleotidyltransferase from Methylacidiphilum infernorum (isolate V4) (Methylokorus infernorum (strain V4)).